Reading from the N-terminus, the 95-residue chain is Large ribosomal subunit protein eL31 (95 aa).

The protein belongs to the eukaryotic ribosomal protein eL31 family.

In Pyrococcus horikoshii (strain ATCC 700860 / DSM 12428 / JCM 9974 / NBRC 100139 / OT-3), this protein is Large ribosomal subunit protein eL31 (rpl31e).